Reading from the N-terminus, the 430-residue chain is Enolase (430 aa).

A (2R)-2-phosphoglycerate-binding site is contributed by glutamine 167. Glutamate 209 functions as the Proton donor in the catalytic mechanism. 3 residues coordinate Mg(2+): aspartate 245, glutamate 286, and aspartate 313. (2R)-2-phosphoglycerate-binding residues include lysine 338, arginine 367, serine 368, and lysine 389. The active-site Proton acceptor is lysine 338.

Belongs to the enolase family. Mg(2+) serves as cofactor.

Its subcellular location is the cytoplasm. It is found in the secreted. The protein resides in the cell surface. The catalysed reaction is (2R)-2-phosphoglycerate = phosphoenolpyruvate + H2O. It participates in carbohydrate degradation; glycolysis; pyruvate from D-glyceraldehyde 3-phosphate: step 4/5. Catalyzes the reversible conversion of 2-phosphoglycerate (2-PG) into phosphoenolpyruvate (PEP). It is essential for the degradation of carbohydrates via glycolysis. The polypeptide is Enolase (Synechococcus sp. (strain WH7803)).